A 258-amino-acid polypeptide reads, in one-letter code: Phosphate import ATP-binding protein PstB (258 aa).

Residues isoleucine 5–glutamine 247 enclose the ABC transporter domain. ATP is bound at residue glycine 37–serine 44.

The protein belongs to the ABC transporter superfamily. Phosphate importer (TC 3.A.1.7) family. The complex is composed of two ATP-binding proteins (PstB), two transmembrane proteins (PstC and PstA) and a solute-binding protein (PstS).

It localises to the cell membrane. The enzyme catalyses phosphate(out) + ATP + H2O = ADP + 2 phosphate(in) + H(+). Part of the ABC transporter complex PstSACB involved in phosphate import. Responsible for energy coupling to the transport system. The sequence is that of Phosphate import ATP-binding protein PstB from Streptomyces griseus.